An 877-amino-acid chain; its full sequence is Alanine--tRNA ligase (877 aa).

Zn(2+) contacts are provided by His-565, His-569, Cys-667, and His-671.

Belongs to the class-II aminoacyl-tRNA synthetase family. The cofactor is Zn(2+).

Its subcellular location is the cytoplasm. The catalysed reaction is tRNA(Ala) + L-alanine + ATP = L-alanyl-tRNA(Ala) + AMP + diphosphate. Its function is as follows. Catalyzes the attachment of alanine to tRNA(Ala) in a two-step reaction: alanine is first activated by ATP to form Ala-AMP and then transferred to the acceptor end of tRNA(Ala). Also edits incorrectly charged Ser-tRNA(Ala) and Gly-tRNA(Ala) via its editing domain. The polypeptide is Alanine--tRNA ligase (Chromobacterium violaceum (strain ATCC 12472 / DSM 30191 / JCM 1249 / CCUG 213 / NBRC 12614 / NCIMB 9131 / NCTC 9757 / MK)).